We begin with the raw amino-acid sequence, 1293 residues long: MEIIRGAPALSTFRVQKLMEACVNAALPVRQIYAEYVHLADLSELLETNEREQLEKILTYGPAIEAHTPQGLLLFVTPRPGTISPWSSKATDIAHNCGLGKVKRLERGVAYYVESDTLTVEQQQTLKGLLHDRMVEVVLDDFAKADVLFKRTEPAPFKSVNVLAEGRRALEVANVEMGLALAEDEIDYLVENFVRLNRNPNDIELMMFAQANSEHCRHKIFNADWTIDGEAQPKSLFKMIKNTFETTPDHVLSAYKDNAAVMEGSVAGRFFPDPNGVYSYHTEPMHVLMKVETHNHPTAISPYPGAATGSGGEIRDEGATGRGSKPKAGLTGFSVSNLKIPGFVQPWEGSYGKPDRIVSALEIMTEGPLGGAAFNNEFGRPALLGYFRTYEQEVSSHNGVEVRGYHKPIMLAGGLGNIREEHVQKGEITVGAKLIVLGGPAMNIGLGGGAASSMASGQSSEDLDFASVQRENPEMERRCQEVIDRCWQLGDKNPIQFIHDVGAGGLSNAFPELVNDGGRGGIFNLRNVPSDEPGMSPLEIWCNESQERYVLSVAAEDLPLFTAICERERAPFAVVGEATQEQHLTLADSHFDNNPIDLPLEVLLGKAPKMSRNVVSAKAVSPALEQSNIDVKEAVKRILSLPTVADKTFLITIGDRTVTGLVNRDQMVGPWQVPVADCAVTAASFDTYAGEAMSMGERTPLALLDFGASARMAVAESIMNIAGADIGSFKRIKLSANWMSAAGHPGEDAGLYEAVKAVGEELCPELSLTIPVGKDSMSMKTAWQQDGANKTVTAPMSLVISAFGVVQDIRNTVTPELRSDKGETSLLLVDLGAGKNRLGGSCLAQVYGELGDIAPDLDDAALLRGFFETMQKLVAKKSVIAYHDRSDGGLFTTLVEMAFAGNTGLAIDLSALQGTDVERLFNEELGGVLQVSRADAELIAAQFAQAGVPCHMIGSLANDQRVTIKDGAREVFSETRVALRTLWSETTYRMQALRDNPACALEEFKLKQDKTDLGLTVNLSFDPSEDVAAPYILKGAAPKMAILREQGVNSHVEMAAAFDRAGFESRDVHMSDILSGRISLEEFQGLVACGGFSYGDVLGAGEGWAKSILFNERARDEFSRFFERDSSFALGVCNGCQMLSNLKEIIPGSEHWPRFVRNRSERFEARFSLVEVQQSPSLFFQGMAGSRMPIAVSHGEGHAEFASAQALALAEASGTIALRFVNGNGEIATQYPQNPNGSPNGLTGICTTDGRVTLMMPHPERVFRTVANSWHPDNWGEDSPWMRMFRNARVNLG.

Residues 305-316 (GAATGSGGEIRD) and alanine 676 each bind ATP. The segment at 305–328 (GAATGSGGEIRDEGATGRGSKPKA) is disordered. Positions 677, 716, 720, and 884 each coordinate Mg(2+). Serine 886 lines the ATP pocket. The Glutamine amidotransferase type-1 domain occupies 1040 to 1293 (MAILREQGVN…MFRNARVNLG (254 aa)). The Nucleophile role is filled by cysteine 1133. Residues histidine 1258 and glutamate 1260 contribute to the active site.

The protein in the N-terminal section; belongs to the FGAMS family. As to quaternary structure, monomer.

The protein resides in the cytoplasm. It carries out the reaction N(2)-formyl-N(1)-(5-phospho-beta-D-ribosyl)glycinamide + L-glutamine + ATP + H2O = 2-formamido-N(1)-(5-O-phospho-beta-D-ribosyl)acetamidine + L-glutamate + ADP + phosphate + H(+). It functions in the pathway purine metabolism; IMP biosynthesis via de novo pathway; 5-amino-1-(5-phospho-D-ribosyl)imidazole from N(2)-formyl-N(1)-(5-phospho-D-ribosyl)glycinamide: step 1/2. In terms of biological role, phosphoribosylformylglycinamidine synthase involved in the purines biosynthetic pathway. Catalyzes the ATP-dependent conversion of formylglycinamide ribonucleotide (FGAR) and glutamine to yield formylglycinamidine ribonucleotide (FGAM) and glutamate. This chain is Phosphoribosylformylglycinamidine synthase, found in Shewanella sp. (strain MR-7).